A 979-amino-acid chain; its full sequence is Putative cellulose synthase-like protein D6 (979 aa).

Positions Met1–Gly24 are disordered. The segment covering Ser14–Gly24 has biased composition (low complexity). Transmembrane regions (helical) follow at residues Ile116 to Leu136 and Ala147 to Leu167. Active-site residues include Asp247 and Asp683. 6 consecutive transmembrane segments (helical) span residues Ile765–Val785, Leu788–Val808, Leu837–Leu857, Ala882–Val902, Trp913–Phe933, and Thr946–Ile966.

It belongs to the glycosyltransferase 2 family. Plant cellulose synthase-like D subfamily.

Its subcellular location is the golgi apparatus membrane. In terms of biological role, thought to be a Golgi-localized beta-glycan synthase that polymerize the backbones of noncellulosic polysaccharides (hemicelluloses) of plant cell wall. The protein is Putative cellulose synthase-like protein D6 (CSLD6) of Arabidopsis thaliana (Mouse-ear cress).